We begin with the raw amino-acid sequence, 494 residues long: Glutamyl-tRNA(Gln) amidotransferase subunit A (494 aa).

Active-site charge relay system residues include Lys-88 and Ser-163. The active-site Acyl-ester intermediate is the Ser-187.

This sequence belongs to the amidase family. GatA subfamily. As to quaternary structure, heterotrimer of A, B and C subunits.

The catalysed reaction is L-glutamyl-tRNA(Gln) + L-glutamine + ATP + H2O = L-glutaminyl-tRNA(Gln) + L-glutamate + ADP + phosphate + H(+). Its function is as follows. Allows the formation of correctly charged Gln-tRNA(Gln) through the transamidation of misacylated Glu-tRNA(Gln) in organisms which lack glutaminyl-tRNA synthetase. The reaction takes place in the presence of glutamine and ATP through an activated gamma-phospho-Glu-tRNA(Gln). This chain is Glutamyl-tRNA(Gln) amidotransferase subunit A, found in Corynebacterium diphtheriae (strain ATCC 700971 / NCTC 13129 / Biotype gravis).